The sequence spans 497 residues: MASIHADVTLVGGGIMSATLAMLIHRLDPALHICMIEQLPDIALESSGALNNAGTGHAGYCELNYTPHDKDGNVLIQRALEINAAFEVSLQFWSHLVNADRENITPSSFINRVPHLSAVWGQKDIDFLKARYTLLKSHHLFSEMKWSEDEQTLADWMPLMMKGRQAEPKLAATRVEHGADVNFGALTRILVSYLQKNANFELLTNTRVVDLHRAHGAKKPWAVKVKNQNSAAKQTIESPFVFLGAGGVALHLLQNSGIEEAAGYGGFPVSGQWLICQNQDLIRQHHAKVYSLAAVGAPPMSVPHLDTRIINGKPSLLFGPYAGFTTKFLKHGSPFDLAKSVRPHNLKSLIGAGKNNFDLTKYLVKEVFQTHSQRMQSLEAFIPNARAEDWQLAHAGKRVQIIKRCHHKWGKLEFGTEIVAAEDGSLAALLGASPGASVSVKTMLDVLERCFPQQMQSAEWQDKLKTMIPSYGRSLINDANLSASVRRYTLDTLKLSS.

It belongs to the MQO family. FAD serves as cofactor.

The catalysed reaction is (S)-malate + a quinone = a quinol + oxaloacetate. It participates in carbohydrate metabolism; tricarboxylic acid cycle; oxaloacetate from (S)-malate (quinone route): step 1/1. The chain is Probable malate:quinone oxidoreductase from Tolumonas auensis (strain DSM 9187 / NBRC 110442 / TA 4).